The sequence spans 495 residues: Protein FAM83F (495 aa).

Alanine 2 is modified (N-acetylalanine). Residues 2-294 (AESQLSCLDE…LYAISEEVNL (293 aa)) are DUF1669. Serine 4 carries the post-translational modification Phosphoserine. 2 disordered regions span residues 341–362 (QQREAGGNVEGQEEGSGGGESA) and 384–495 (PISP…CVIS). A compositionally biased stretch (low complexity) spans 447 to 458 (PAVPSSMASSPS). Serine 477 carries the post-translational modification Phosphoserine.

It belongs to the FAM83 family. As to quaternary structure, directly interacts (via DUF1669) with CSNK1A1 and CSNK1A1L.

It is found in the cell membrane. This Mus musculus (Mouse) protein is Protein FAM83F (Fam83f).